The sequence spans 187 residues: UPF0398 protein SAB1311c (187 aa).

It belongs to the UPF0398 family.

The protein is UPF0398 protein SAB1311c of Staphylococcus aureus (strain bovine RF122 / ET3-1).